Consider the following 142-residue polypeptide: Midkine-A (142 aa).

The first 20 residues, 1–20 (MELRAFCVILLITVLAVSSQ), serve as a signal peptide directing secretion. 5 disulfide bridges follow: Cys36-Cys60, Cys44-Cys69, Cys51-Cys73, Cys83-Cys115, and Cys93-Cys125.

The protein belongs to the pleiotrophin family. In terms of tissue distribution, expression at the mid-gastrula stage begins in the neural anlage, and becomes increasingly prominent in the central nervous system and head mesenchyme during neurula stages. Although the mRNA is localized to the developing central nervous system (CNS), the protein is deposited at the neuromuscular junction (NMJ). In the tailbud stage embryo, expressed in the head and tail regions as well as in the CNS. In adults, expression is highest in the brain, eye and bone, with lower expression in the heart and lung. Not expressed in the ovary.

The protein resides in the secreted. Its function is as follows. Secreted protein that functions as a cytokine and growth factor and mediates its signal through cell-surface proteoglycan and non-proteoglycan receptors. Binds cell-surface proteoglycan receptors via their chondroitin sulfate (CS) groups. Thereby regulates many processes like inflammatory response, cell proliferation, cell adhesion, cell growth, cell survival, tissue regeneration, cell differentiation and cell migration. Inhibits mesoderm formation and promotes neural formation during development. Plays a role in development of the neuromuscular junction (NMJ). Has antibacterial activity against both Gram-positive and Gram-negative bacteria. The polypeptide is Midkine-A (mdk-a) (Xenopus laevis (African clawed frog)).